We begin with the raw amino-acid sequence, 273 residues long: Putative pyruvate, phosphate dikinase regulatory protein (273 aa).

Residue 153-160 (GISRTSKT) participates in ADP binding.

The protein belongs to the pyruvate, phosphate/water dikinase regulatory protein family. PDRP subfamily.

The enzyme catalyses N(tele)-phospho-L-histidyl/L-threonyl-[pyruvate, phosphate dikinase] + ADP = N(tele)-phospho-L-histidyl/O-phospho-L-threonyl-[pyruvate, phosphate dikinase] + AMP + H(+). It catalyses the reaction N(tele)-phospho-L-histidyl/O-phospho-L-threonyl-[pyruvate, phosphate dikinase] + phosphate + H(+) = N(tele)-phospho-L-histidyl/L-threonyl-[pyruvate, phosphate dikinase] + diphosphate. Bifunctional serine/threonine kinase and phosphorylase involved in the regulation of the pyruvate, phosphate dikinase (PPDK) by catalyzing its phosphorylation/dephosphorylation. The protein is Putative pyruvate, phosphate dikinase regulatory protein of Rhizobium etli (strain ATCC 51251 / DSM 11541 / JCM 21823 / NBRC 15573 / CFN 42).